Here is a 150-residue protein sequence, read N- to C-terminus: UPF0178 protein Sbal223_2514 (150 aa).

Belongs to the UPF0178 family.

This chain is UPF0178 protein Sbal223_2514, found in Shewanella baltica (strain OS223).